A 398-amino-acid chain; its full sequence is NADH-ubiquinone oxidoreductase 49 kDa subunit (398 aa).

It belongs to the complex I 49 kDa subunit family.

It is found in the mitochondrion. It catalyses the reaction a ubiquinone + NADH + 5 H(+)(in) = a ubiquinol + NAD(+) + 4 H(+)(out). Core subunit of the mitochondrial membrane respiratory chain NADH dehydrogenase (Complex I) that is believed to belong to the minimal assembly required for catalysis. Complex I functions in the transfer of electrons from NADH to the respiratory chain. The immediate electron acceptor for the enzyme is believed to be ubiquinone. Component of the iron-sulfur (IP) fragment of the enzyme. Component of the iron-sulfur (IP) fragment of the enzyme. The polypeptide is NADH-ubiquinone oxidoreductase 49 kDa subunit (NAD7) (Cafeteria roenbergensis (Marine flagellate)).